A 942-amino-acid polypeptide reads, in one-letter code: Inter-alpha-trypsin inhibitor heavy chain H5 (942 aa).

The first 16 residues, 1 to 16, serve as a signal peptide directing secretion; it reads MLLLLGLCLGLSLCVG. The region spanning 35 to 161 is the VIT domain; that stretch reads VPRQVRLLQR…KAAFFLSYEE (127 aa). N-linked (GlcNAc...) asparagine glycans are attached at residues N97 and N127. Disordered regions lie at residues 116-136 and 208-227; these read KKSG…NGEK and SRQR…PSTV. N231, N421, and N508 each carry an N-linked (GlcNAc...) asparagine glycan. Positions 295–478 constitute a VWFA domain; it reads NVVFVLDSSA…SQLIGFYDEI (184 aa). The interval 550–571 is disordered; the sequence is QKAGKDVTGSPRPGGDGEGDTN. N-linked (GlcNAc...) asparagine glycans are attached at residues N776, N795, and N862.

This sequence belongs to the ITIH family. As to expression, abundantly expressed in placenta. Less abundant expression in mammary gland and ovary. Expression is barely detectable levels in all other tissues tested.

It localises to the secreted. In terms of biological role, may act as a tumor suppressor. This chain is Inter-alpha-trypsin inhibitor heavy chain H5 (ITIH5), found in Homo sapiens (Human).